Consider the following 154-residue polypeptide: Deoxyuridine 5'-triphosphate nucleotidohydrolase (154 aa).

Substrate-binding positions include 68–70 (RSG), Asn-81, and 85–87 (TID).

Belongs to the dUTPase family. Requires Mg(2+) as cofactor.

It catalyses the reaction dUTP + H2O = dUMP + diphosphate + H(+). It participates in pyrimidine metabolism; dUMP biosynthesis; dUMP from dCTP (dUTP route): step 2/2. Its function is as follows. This enzyme is involved in nucleotide metabolism: it produces dUMP, the immediate precursor of thymidine nucleotides and it decreases the intracellular concentration of dUTP so that uracil cannot be incorporated into DNA. The sequence is that of Deoxyuridine 5'-triphosphate nucleotidohydrolase from Acidiphilium cryptum (strain JF-5).